The primary structure comprises 443 residues: MGQTPTIAINHLGCEKNRIDSEHMLGLLVEAGYQVDANEELADYVIVNTCSFIQDARQESVRTLVELAEAKKKIVISGCLAQHFQEQLLEEIPEAVAVVGTGDYQNIVDIIRRTEQGQRVKAISPNPSFIADENLPRYRTTNEAIAYLRVAEGCDYRCAFCIIPQLRGKQRSRPIESIVAEAEQLASQGVKELILISQITTNYGLDLYGEPKLAELLQALGKVDIPWIRIHYAYPTGLTPKVIEAIRDTPNVLPYLDLPLQHSHPDILRAMNRPWQGQVNDDIITRLKTALPDAVLRTTFIVGFPGETEEHFGHLLDFVQRHQFDHVGVFTFSPEEGTAAFDLPNAVPEEVMGDRRDRLMALQQPISAQKNAACLGQTLDVLIEQENPSTGEFIGRSTRFAPEVDGLVYVKGNANLNEIVPVVITATDDYDLYGMTAEEAKVF.

The MTTase N-terminal domain occupies 5-116 (PTIAINHLGC…IVDIIRRTEQ (112 aa)). [4Fe-4S] cluster-binding residues include Cys-14, Cys-50, Cys-79, Cys-154, Cys-158, and Cys-161. Residues 140 to 369 (TTNEAIAYLR…MALQQPISAQ (230 aa)) form the Radical SAM core domain. The region spanning 372-438 (AACLGQTLDV…DYDLYGMTAE (67 aa)) is the TRAM domain.

It belongs to the methylthiotransferase family. RimO subfamily. [4Fe-4S] cluster serves as cofactor.

It localises to the cytoplasm. The enzyme catalyses L-aspartate(89)-[ribosomal protein uS12]-hydrogen + (sulfur carrier)-SH + AH2 + 2 S-adenosyl-L-methionine = 3-methylsulfanyl-L-aspartate(89)-[ribosomal protein uS12]-hydrogen + (sulfur carrier)-H + 5'-deoxyadenosine + L-methionine + A + S-adenosyl-L-homocysteine + 2 H(+). Functionally, catalyzes the methylthiolation of an aspartic acid residue of ribosomal protein uS12. The polypeptide is Ribosomal protein uS12 methylthiotransferase RimO (Synechocystis sp. (strain ATCC 27184 / PCC 6803 / Kazusa)).